Reading from the N-terminus, the 1052-residue chain is Swarming motility protein SwrC (1052 aa).

The protein belongs to the resistance-nodulation-cell division (RND) (TC 2.A.6) family.

In terms of biological role, required for self-resistance to surfactin, an antimicrobial lipopeptide surfactant produced by B.subtilis. Also required for swarming motility. The chain is Swarming motility protein SwrC (swrC) from Bacillus subtilis (strain 168).